The chain runs to 422 residues: MSSSCSGLSRVLVAVATALVSASSPCPQAWGPPGVQYGQPGRSVKLCCPGVTAGDPVSWFRDGEPKLLQGPDSGLGHELVLAQADSTDEGTYICRTLDGALGGTVTLQLGYPPARPVVSCQAADYENFSCTWSPSQISGLPTRYLTSYRKKTVLGADSQRRSPSTGPWPCPQDPLGAARCVVHGAEFWSQYRINVTEVNPLGASTRLLDVSLQSILRPDPPQGLRVESVPGYPRRLRASWTYPASWPRQPHFLLKFRLQYRPAQHPAWSTVEPAGLEEVITDAVAGLPHAVRVSARDFLDAGTWSTWSPEAWGTPSTGTVPKEIPAWGQLHTQPEVEPQVDSPAPPRPSLQPHPRLLDHRDSVEQVAVLVSLGILSFLGLVAGALALGLWLRLRRGGKDGSPKPGFLASVIPVDRHPGAPNL.

Positions 1 to 22 (MSSSCSGLSRVLVAVATALVSA) are cleaved as a signal peptide. Topologically, residues 24 to 370 (SPCPQAWGPP…DSVEQVAVLV (347 aa)) are extracellular. The Ig-like C2-type domain maps to 27–110 (PQAWGPPGVQ…LGGTVTLQLG (84 aa)). Cystine bridges form between Cys48/Cys94, Cys120/Cys130, and Cys170/Cys180. Fibronectin type-III domains lie at 112–219 (PPAR…LRPD) and 220–317 (PPQG…TPST). N-linked (GlcNAc...) asparagine glycosylation occurs at Asn127. A glycan (N-linked (GlcNAc...) asparagine) is linked at Asn194. Residues 304 to 308 (WSTWS) carry the WSXWS motif motif. The disordered stretch occupies residues 335-355 (EVEPQVDSPAPPRPSLQPHPR). Residues 371–391 (SLGILSFLGLVAGALALGLWL) traverse the membrane as a helical segment. At 392 to 422 (RLRRGGKDGSPKPGFLASVIPVDRHPGAPNL) the chain is on the cytoplasmic side.

Belongs to the type I cytokine receptor family. Type 3 subfamily. On IL11 binding, forms a multimer complex with IL6ST/gp130. A short soluble form is also released from the membrane by proteolysis. The sIL11RA is formed either by limited proteolysis of membrane-bound receptors, a process referred to as ectodomain shedding, or directly secreted from the cells after alternative mRNA splicing. mIL11RA is cleaved by the proteases ADAM10, ELANE and PRTN3.

The protein localises to the membrane. It is found in the secreted. Its function is as follows. Receptor for interleukin-11 (IL11). The receptor systems for IL6, LIF, OSM, CNTF, IL11 and CT1 can utilize IL6ST for initiating signal transmission. The IL11/IL11RA/IL6ST complex may be involved in the control of proliferation and/or differentiation of skeletogenic progenitor or other mesenchymal cells. Essential for the normal development of craniofacial bones and teeth. Restricts suture fusion and tooth number. Functionally, soluble form of IL11 receptor (sIL11RA) that acts as an agonist of IL11 activity. The IL11:sIL11RA complex binds to IL6ST/gp130 on cell surfaces and induces signaling also on cells that do not express membrane-bound IL11RA in a process called IL11 trans-signaling. In Pongo abelii (Sumatran orangutan), this protein is Interleukin-11 receptor subunit alpha (IL11RA).